The following is a 323-amino-acid chain: Fructokinase-1 (323 aa).

It belongs to the carbohydrate kinase PfkB family. Expressed in stems, at higher levels in roots, and hardly detectable in leaves.

It catalyses the reaction D-fructose + ATP = D-fructose 6-phosphate + ADP + H(+). It functions in the pathway glycan biosynthesis; starch biosynthesis. Its activity is regulated as follows. Inhibited at high fructose. May play an important role in maintaining the flux of carbon towards starch formation in endosperm. May also be involved in a sugar-sensing pathway. This chain is Fructokinase-1 (FRK1), found in Zea mays (Maize).